Consider the following 83-residue polypeptide: Retinal cone rhodopsin-sensitive cGMP 3',5'-cyclic phosphodiesterase subunit gamma (83 aa).

Low complexity predominate over residues 1 to 19 (MSDNTTLAPPAASQAPATP). Residues 1–51 (MSDNTTLAPPAASQAPATPRKGPPKFKQRQTRQFKSKPPKKGVKGFGDDIP) form a disordered region. Over residues 22 to 43 (GPPKFKQRQTRQFKSKPPKKGV) the composition is skewed to basic residues.

This sequence belongs to the rod/cone cGMP-PDE gamma subunit family. In terms of assembly, tetramer composed of two catalytic chains (alpha and beta), and two inhibitory chains (gamma).

It carries out the reaction 3',5'-cyclic GMP + H2O = GMP + H(+). In terms of biological role, participates in processes of transmission and amplification of the visual signal. cGMP-PDEs are the effector molecules in G-protein-mediated phototransduction in vertebrate rods and cones. In Ictidomys tridecemlineatus (Thirteen-lined ground squirrel), this protein is Retinal cone rhodopsin-sensitive cGMP 3',5'-cyclic phosphodiesterase subunit gamma (PDE6H).